Here is a 297-residue protein sequence, read N- to C-terminus: 4,5-DOPA dioxygenase extradiol-like protein (297 aa).

Zn(2+) contacts are provided by H30, H82, H205, and H263.

This sequence belongs to the DODA-type extradiol aromatic ring-opening dioxygenase family. The cofactor is Zn(2+).

It localises to the cytoplasm. Its subcellular location is the nucleus. Functionally, may be involved in the metabolism of aromatic compounds. This chain is 4,5-DOPA dioxygenase extradiol-like protein, found in Schizosaccharomyces pombe (strain 972 / ATCC 24843) (Fission yeast).